Here is a 153-residue protein sequence, read N- to C-terminus: Large ribosomal subunit protein uL13 (153 aa).

This sequence belongs to the universal ribosomal protein uL13 family. As to quaternary structure, part of the 50S ribosomal subunit.

Functionally, this protein is one of the early assembly proteins of the 50S ribosomal subunit, although it is not seen to bind rRNA by itself. It is important during the early stages of 50S assembly. This chain is Large ribosomal subunit protein uL13, found in Xanthobacter autotrophicus (strain ATCC BAA-1158 / Py2).